The following is an 81-amino-acid chain: Cytochrome b559 subunit alpha (81 aa).

A helical transmembrane segment spans residues 21-35; it reads VIHSITIPMLFIAGW. Residue His23 participates in heme binding.

It belongs to the PsbE/PsbF family. In terms of assembly, heterodimer of an alpha subunit and a beta subunit. PSII is composed of 1 copy each of membrane proteins PsbA, PsbB, PsbC, PsbD, PsbE, PsbF, PsbH, PsbI, PsbJ, PsbK, PsbL, PsbM, PsbT, PsbX, PsbY, PsbZ, Psb30/Ycf12, peripheral proteins PsbO, CyanoQ (PsbQ), PsbU, PsbV and a large number of cofactors. It forms dimeric complexes. It depends on heme b as a cofactor.

The protein localises to the cellular thylakoid membrane. Its function is as follows. This b-type cytochrome is tightly associated with the reaction center of photosystem II (PSII). PSII is a light-driven water:plastoquinone oxidoreductase that uses light energy to abstract electrons from H(2)O, generating O(2) and a proton gradient subsequently used for ATP formation. It consists of a core antenna complex that captures photons, and an electron transfer chain that converts photonic excitation into a charge separation. The polypeptide is Cytochrome b559 subunit alpha (Picosynechococcus sp. (strain ATCC 27264 / PCC 7002 / PR-6) (Agmenellum quadruplicatum)).